The primary structure comprises 215 residues: Cytidylate kinase (215 aa).

10–18 (GPAAAGKST) serves as a coordination point for ATP.

Belongs to the cytidylate kinase family. Type 1 subfamily.

It is found in the cytoplasm. It catalyses the reaction CMP + ATP = CDP + ADP. The enzyme catalyses dCMP + ATP = dCDP + ADP. The sequence is that of Cytidylate kinase from Staphylococcus epidermidis (strain ATCC 35984 / DSM 28319 / BCRC 17069 / CCUG 31568 / BM 3577 / RP62A).